A 420-amino-acid polypeptide reads, in one-letter code: Tyrosine--tRNA ligase (420 aa).

Tyr39 provides a ligand contact to L-tyrosine. Positions 44 to 53 (CTAPSLHIGS) match the 'HIGH' region motif. The L-tyrosine site is built by Tyr176 and Gln180. The 'KMSKS' region signature appears at 236–240 (KMGKT). Lys239 serves as a coordination point for ATP. The 66-residue stretch at 349–414 (IPLIDLLYDT…AGKKRHIKIL (66 aa)) folds into the S4 RNA-binding domain.

It belongs to the class-I aminoacyl-tRNA synthetase family. TyrS type 1 subfamily. In terms of assembly, homodimer.

It localises to the cytoplasm. The enzyme catalyses tRNA(Tyr) + L-tyrosine + ATP = L-tyrosyl-tRNA(Tyr) + AMP + diphosphate + H(+). In terms of biological role, catalyzes the attachment of tyrosine to tRNA(Tyr) in a two-step reaction: tyrosine is first activated by ATP to form Tyr-AMP and then transferred to the acceptor end of tRNA(Tyr). This Wolbachia pipientis subsp. Culex pipiens (strain wPip) protein is Tyrosine--tRNA ligase.